The primary structure comprises 655 residues: p-hydroxybenzoic acid efflux pump subunit AaeB (655 aa).

At 1 to 12 the chain is on the periplasmic side; that stretch reads MGIFSIANQHIR. The chain crosses the membrane as a helical span at residues 13-33; that stretch reads FAVKLATAIVLALFVGFHFQL. Residues 34–37 lie on the Cytoplasmic side of the membrane; that stretch reads ETPR. A helical transmembrane segment spans residues 38–58; that stretch reads WAVLTAAIVAAGPAFAAGGEP. Topologically, residues 59 to 68 are periplasmic; the sequence is YSGAIRYRGF. A helical membrane pass occupies residues 69–89; the sequence is LRIIGTFIGCIAGLVIIIAMI. Residues 90 to 92 are Cytoplasmic-facing; it reads RAP. A helical transmembrane segment spans residues 93–113; it reads LLMILVCCIWAGFCTWISSLV. Over 114–120 the chain is Periplasmic; the sequence is RIENSYA. The chain crosses the membrane as a helical span at residues 121 to 141; it reads WGLAGYTALIIVITIQPEPLL. The Cytoplasmic portion of the chain corresponds to 142–151; it reads TPQFAVERCS. Residues 152-172 traverse the membrane as a helical segment; that stretch reads EIVIGIVCAIMADLLFSPRSI. The Periplasmic segment spans residues 173–369; the sequence is KQEVDRELES…RTTLSCILGT (197 aa). Residues 370–390 traverse the membrane as a helical segment; sequence LFWLWTGWTSGSGAMVMIAVV. Topologically, residues 391–406 are cytoplasmic; that stretch reads TSLAMRLPNPRMVAID. The helical transmembrane segment at 407–427 threads the bilayer; sequence FIYGTLAALPLGLLYFLVIIP. Residues 428-430 lie on the Periplasmic side of the membrane; that stretch reads NTQ. Residues 431-451 traverse the membrane as a helical segment; that stretch reads QSMLLLCISLAVLGFFLGIEV. Over 452-458 the chain is Cytoplasmic; that stretch reads QKRRLGS. Residues 459–479 traverse the membrane as a helical segment; it reads MGALASTINIIVLDNPMTFHF. Topologically, residues 480–481 are periplasmic; it reads SQ. Residues 482 to 502 form a helical membrane-spanning segment; the sequence is FLDSALGQIVGCVLAFTVILL. At 503–655 the chain is on the cytoplasmic side; that stretch reads VRDKSRDRTG…HKYQHALTDS (153 aa).

Belongs to the aromatic acid exporter ArAE (TC 2.A.85) family.

Its subcellular location is the cell inner membrane. Forms an efflux pump with AaeA. Could function as a metabolic relief valve, allowing to eliminate certain compounds when they accumulate to high levels in the cell. The chain is p-hydroxybenzoic acid efflux pump subunit AaeB from Escherichia coli O6:H1 (strain CFT073 / ATCC 700928 / UPEC).